The primary structure comprises 87 residues: Mitochondrial import protein 2 (87 aa).

At 1-53 (MADSEDTSVILQGIDTINSVEGLEEDGYLSDEDTSLSNELADAQRQWEESLQQ) the chain is on the cytoplasmic side. Residues 54–71 (LNKLLNWVLLPLLGKYIG) traverse the membrane as a helical segment. Residues 72 to 87 (RRMAKTLWSRFIEHFV) lie on the Mitochondrial intermembrane side of the membrane.

Belongs to the MIM2 family. In terms of assembly, component of the MIM complex containing at least MIM1 and MIM2. Interacts with MIM1; interaction is direct.

The protein localises to the mitochondrion outer membrane. In terms of biological role, component of the MIM complex required for outer membrane protein import. Involved in import of the subset of proteins with multiple alpha-helical transmembrane segments, including UGO1, TOM20 and FZO1. This chain is Mitochondrial import protein 2, found in Saccharomyces cerevisiae (strain ATCC 204508 / S288c) (Baker's yeast).